Reading from the N-terminus, the 143-residue chain is ATP synthase epsilon chain (143 aa).

The protein belongs to the ATPase epsilon chain family. As to quaternary structure, F-type ATPases have 2 components, CF(1) - the catalytic core - and CF(0) - the membrane proton channel. CF(1) has five subunits: alpha(3), beta(3), gamma(1), delta(1), epsilon(1). CF(0) has three main subunits: a, b and c.

The protein localises to the cell inner membrane. Functionally, produces ATP from ADP in the presence of a proton gradient across the membrane. The chain is ATP synthase epsilon chain from Dichelobacter nodosus (strain VCS1703A).